A 248-amino-acid chain; its full sequence is Proteasome subunit alpha type-7 (248 aa).

O-linked (GlcNAc) serine glycosylation is present at Ser-130. Residue Tyr-153 is modified to Phosphotyrosine; by ABL1 and ABL2. An N6-acetyllysine modification is found at Lys-227.

Belongs to the peptidase T1A family. In terms of assembly, the 26S proteasome consists of a 20S proteasome core and two 19S regulatory subunits. The 20S proteasome core is a barrel-shaped complex made of 28 subunits that are arranged in four stacked rings. The two outer rings are each formed by seven alpha subunits, and the two inner rings are formed by seven beta subunits. The proteolytic activity is exerted by three beta-subunits PSMB5, PSMB6 and PSMB7. PSMA7 interacts directly with the PSMG1-PSMG2 heterodimer which promotes 20S proteasome assembly. Interacts with HIF1A. Interacts with RAB7A. Interacts with PRKN. Interacts with ABL1 and ABL2. Interacts with EMAP2. Interacts with MAVS. Phosphorylation by ABL1 or ABL2 leads to an inhibition of proteasomal activity and cell cycle transition blocks. As to expression, detected in liver (at protein level).

The protein localises to the cytoplasm. It is found in the nucleus. Component of the 20S core proteasome complex involved in the proteolytic degradation of most intracellular proteins. This complex plays numerous essential roles within the cell by associating with different regulatory particles. Associated with two 19S regulatory particles, forms the 26S proteasome and thus participates in the ATP-dependent degradation of ubiquitinated proteins. The 26S proteasome plays a key role in the maintenance of protein homeostasis by removing misfolded or damaged proteins that could impair cellular functions, and by removing proteins whose functions are no longer required. Associated with the PA200 or PA28, the 20S proteasome mediates ubiquitin-independent protein degradation. This type of proteolysis is required in several pathways including spermatogenesis (20S-PA200 complex) or generation of a subset of MHC class I-presented antigenic peptides (20S-PA28 complex). The sequence is that of Proteasome subunit alpha type-7 (Psma7) from Mus musculus (Mouse).